We begin with the raw amino-acid sequence, 83 residues long: Acid shock protein (83 aa).

The first 21 residues, 1-21 (MKKVLALVVAAAMGLSSAAFA), serve as a signal peptide directing secretion. Low complexity predominate over residues 22–40 (AETATPAKTATPAKTTQNT). Residues 22-56 (AETATPAKTATPAKTTQNTQHHKKQHKKTVEQKAQ) constitute a propeptide that is removed on maturation. The interval 22-83 (AETATPAKTA…TSKTTSQPAA (62 aa)) is disordered. Over residues 57 to 70 (AAKKHQKKDGKKAP) the composition is skewed to basic residues. Low complexity predominate over residues 71 to 83 (AKSTSKTTSQPAA).

It belongs to the Asr family. Post-translationally, proteolytic processing gives rise to the active protein.

It is found in the periplasm. In terms of biological role, required for growth and/or survival at acidic conditions. In Salmonella heidelberg (strain SL476), this protein is Acid shock protein.